The following is a 92-amino-acid chain: Enhancer of yellow 2 transcription factor (92 aa).

The protein belongs to the ENY2 family. Component of the nuclear pore complex (NPC)-associated TREX-2 complex (transcription and export complex 2). Component of the SAGA transcription coactivator-HAT complex. Within the SAGA complex, participates in a subcomplex of SAGA called the DUB module (deubiquitination module).

Its subcellular location is the nucleus. It is found in the nucleoplasm. Its function is as follows. Involved in mRNA export coupled transcription activation by association with both the TREX-2 and the SAGA complexes. The transcription regulatory histone acetylation (HAT) complex SAGA is a multiprotein complex that activates transcription by remodeling chromatin and mediating histone acetylation and deubiquitination. Within the SAGA complex, participates in a subcomplex that specifically deubiquitinates histones. The SAGA complex is recruited to specific gene promoters by activators, where it is required for transcription. The TREX-2 complex functions in docking export-competent ribonucleoprotein particles (mRNPs) to the nuclear entrance of the nuclear pore complex (nuclear basket). TREX-2 participates in mRNA export and accurate chromatin positioning in the nucleus by tethering genes to the nuclear periphery. This Aedes aegypti (Yellowfever mosquito) protein is Enhancer of yellow 2 transcription factor.